The following is a 551-amino-acid chain: Cytochrome c lysine N-methyltransferase 1 (551 aa).

Residues 46-273 (DKIELLRVSS…PNTEVLITYK (228 aa)) enclose the SET domain. The segment at 184-288 (IELLRQIYSA…LAMITKYGFD (105 aa)) is SET-like.

It belongs to the class V-like SAM-binding methyltransferase superfamily.

The protein localises to the cytoplasm. Its subcellular location is the cytosol. The catalysed reaction is L-lysyl-[cytochrome c] + S-adenosyl-L-methionine = N(6)-methyl-L-lysyl-[cytochrome c] + S-adenosyl-L-homocysteine + H(+). Functionally, methyltransferase which mediates trimethylation of cytochrome c (CYC1). This Candida glabrata (strain ATCC 2001 / BCRC 20586 / JCM 3761 / NBRC 0622 / NRRL Y-65 / CBS 138) (Yeast) protein is Cytochrome c lysine N-methyltransferase 1 (CTM1).